A 161-amino-acid polypeptide reads, in one-letter code: Zinc metalloproteinase/disintegrin (161 aa).

A Peptidase M12B domain is found at 1–72; the sequence is ERDLLVAVTM…ENPQCILNKH (72 aa). H12 contributes to the Zn(2+) binding site. The active site involves E13. Zn(2+) contacts are provided by H16 and H22. Disulfide bonds link C27-C51 and C29-C34. Residues 73–88 constitute a propeptide that is removed on maturation; it reads LRTDTVSTPVSGNELL. Residues 89 to 161 form the Disintegrin domain; sequence EAGEECDCGT…ADCPRNRFHA (73 aa). 6 cysteine pairs are disulfide-bonded: C94/C109, C96/C104, C103/C126, C117/C123, C122/C147, and C135/C154. The Cell attachment site motif lies at 139 to 141; sequence RGD.

Belongs to the venom metalloproteinase (M12B) family. P-II subfamily. P-IIa sub-subfamily. In terms of assembly, monomer. As to expression, expressed by the venom gland.

It localises to the secreted. Functionally, impairs hemostasis in the envenomed animal. Its function is as follows. Disintegrin: inhibit platelet aggregation induced by ADP, thrombin, platelet-activating factor and collagen. Acts by inhibiting fibrinogen interaction with platelet receptors GPIIb/GPIIIa (ITGA2B/ITGB3). This chain is Zinc metalloproteinase/disintegrin, found in Bothrops jararaca (Jararaca).